Consider the following 266-residue polypeptide: Glutamate racemase (266 aa).

Residues 9–10 (DS) and 41–42 (YG) each bind substrate. Residue Cys72 is the Proton donor/acceptor of the active site. Position 73 to 74 (73 to 74 (NT)) interacts with substrate. Residue Cys184 is the Proton donor/acceptor of the active site. Substrate is bound at residue 185–186 (TH).

This sequence belongs to the aspartate/glutamate racemases family. Homodimer.

It catalyses the reaction L-glutamate = D-glutamate. It participates in cell wall biogenesis; peptidoglycan biosynthesis. Provides the (R)-glutamate required for cell wall biosynthesis. The sequence is that of Glutamate racemase from Staphylococcus aureus (strain MRSA252).